We begin with the raw amino-acid sequence, 75 residues long: uncharacterized protein (75 aa).

It localises to the plastid. The protein localises to the chloroplast. This is an uncharacterized protein from Calycanthus floridus var. glaucus (Eastern sweetshrub).